The following is a 206-amino-acid chain: Small ribosomal subunit protein uS4 (206 aa).

An S4 RNA-binding domain is found at 96–156; sequence GRLDNVVYRM…EKAKKQARIK (61 aa).

Belongs to the universal ribosomal protein uS4 family. Part of the 30S ribosomal subunit. Contacts protein S5. The interaction surface between S4 and S5 is involved in control of translational fidelity.

Its function is as follows. One of the primary rRNA binding proteins, it binds directly to 16S rRNA where it nucleates assembly of the body of the 30S subunit. In terms of biological role, with S5 and S12 plays an important role in translational accuracy. In Aeromonas hydrophila subsp. hydrophila (strain ATCC 7966 / DSM 30187 / BCRC 13018 / CCUG 14551 / JCM 1027 / KCTC 2358 / NCIMB 9240 / NCTC 8049), this protein is Small ribosomal subunit protein uS4.